Here is a 313-residue protein sequence, read N- to C-terminus: Short-chain dehydrogenase/reductase family 9C member 7 (313 aa).

29–53 (FITGCDSGFGNLLARQLVDRGMRVL) is an NADP(+) binding site. Position 160 (serine 160) interacts with substrate. The active-site Proton acceptor is tyrosine 172. Residue serine 185 is modified to Phosphoserine.

The protein belongs to the short-chain dehydrogenases/reductases (SDR) family.

The protein resides in the cytoplasm. The catalysed reaction is a N-[omega-(9R,10R)-epoxy-(13R)-hydroxy-(11E)-octadecenoyloxy]acyl-beta-D-glucosyl-(1&lt;-&gt;1)-sphing-4E-enine + NAD(+) = a N-[omega-(9R,10R)-epoxy-13-oxo-(11E)-octadecenoyloxy]acyl-beta-D-glucosyl-(1&lt;-&gt;1)-sphing-4E-enine + NADH + H(+). It carries out the reaction a N-[omega-(9R,10R)-epoxy-(13R)-hydroxy-(11E)-octadecenoyloxy]-acylsphing-4E-enine + NAD(+) = a N-[omega-(9R,10R)-epoxy-13-oxo-(11E)-octadecenoyloxy]-acylsphing-4E-enine + NADH + H(+). Plays a crucial role in the formation of the epidermal permeability barrier. Catalyzes the NAD+-dependent dehydrogenation of the linoleate 9,10-trans-epoxy-11E-13-alcohol esterified in omega-O-acylceramides (such as in N-[omega-(9R,10R)-epoxy-(13R)-hydroxy-(11E)-octadecenoyloxy]-acylsphing-4E-enine) to the corresponding 13-ketone, the reactive moiety required for binding of epidermal ceramides to proteins. Displays weak conversion of all-trans-retinal to all-trans-retinol in the presence of NADH. Has apparently no steroid dehydrogenase activity. The sequence is that of Short-chain dehydrogenase/reductase family 9C member 7 (SDR9C7) from Bos taurus (Bovine).